Consider the following 497-residue polypeptide: Anthranilate synthase component 1 (497 aa).

Residues Ser49 and 271-273 (PYL) contribute to the L-tryptophan site. Position 312 to 313 (312 to 313 (GT)) interacts with chorismate. Residue Glu339 participates in Mg(2+) binding. Residues Arg447, 461 to 463 (GAG), and Gly463 each bind chorismate. Residue Glu476 coordinates Mg(2+).

It belongs to the anthranilate synthase component I family. As to quaternary structure, heterotetramer consisting of two non-identical subunits: a beta subunit (TrpG) and a large alpha subunit (TrpE). Mg(2+) serves as cofactor.

The enzyme catalyses chorismate + L-glutamine = anthranilate + pyruvate + L-glutamate + H(+). It functions in the pathway amino-acid biosynthesis; L-tryptophan biosynthesis; L-tryptophan from chorismate: step 1/5. Feedback inhibited by tryptophan. Part of a heterotetrameric complex that catalyzes the two-step biosynthesis of anthranilate, an intermediate in the biosynthesis of L-tryptophan. In the first step, the glutamine-binding beta subunit (TrpG) of anthranilate synthase (AS) provides the glutamine amidotransferase activity which generates ammonia as a substrate that, along with chorismate, is used in the second step, catalyzed by the large alpha subunit of AS (TrpE) to produce anthranilate. In the absence of TrpG, TrpE can synthesize anthranilate directly from chorismate and high concentrations of ammonia. This chain is Anthranilate synthase component 1 (trpE), found in Acinetobacter calcoaceticus.